We begin with the raw amino-acid sequence, 2178 residues long: Genome polyprotein (2178 aa).

Residues 1-20 are disordered; the sequence is MGAQVSTQKSGSHENQNILT. A lipid anchor (N-myristoyl glycine; by host) is attached at glycine 2. At 2 to 1490 the chain is on the cytoplasmic side; the sequence is GAQVSTQKSG…AVNQASMIIN (1489 aa). The amphipathic alpha-helix stretch occupies residues 564–584; that stretch reads ALTEGLSDELEEVIVEKTKQT. Residues histidine 875 and aspartate 893 each act as for protease 2A activity in the active site. Zn(2+)-binding residues include cysteine 910 and cysteine 912. The For protease 2A activity role is filled by cysteine 964. Residues cysteine 970 and histidine 972 each contribute to the Zn(2+) site. The membrane-binding stretch occupies residues 1100–1172; sequence NDGWFRKFND…HDSNPTQEKR (73 aa). The interval 1100 to 1238 is oligomerization; the sequence is NDGWFRKFND…TPGSGKSLTT (139 aa). Positions 1121–1125 are RNA-binding; that stretch reads ANKIS. Residues 1204–1360 enclose the SF3 helicase domain; that stretch reads KNKITNYMQF…STYTKNGKLN (157 aa). Zn(2+)-binding residues include cysteine 1368, cysteine 1371, cysteine 1380, and cysteine 1385. Residues 1368–1385 form a C4-type zinc finger; the sequence is CKDCHQPSNFKKCCPLVC. The interval 1412–1419 is RNA-binding; that stretch reads DYKNKVKI. Residues 1423-1428 form an oligomerization region; that stretch reads LEVLFQ. The stretch at 1491–1506 is an intramembrane region; sequence TILMFVSTLGIVYVIY. At 1507 to 2178 the chain is on the cytoplasmic side; sequence KLFAQTQGPY…VLRRRWLDLF (672 aa). Position 1516 is an O-(5'-phospho-RNA)-tyrosine (tyrosine 1516). The 178-residue stretch at 1537–1714 folds into the Peptidase C3 domain; it reads GPNTEFALSL…FSAQLKKQYF (178 aa). Active-site for protease 3C activity residues include histidine 1576, glutamate 1607, and cysteine 1682. The region spanning 1946–2059 is the RdRp catalytic domain; it reads HLMAFDYSNF…SYPFELDSNI (114 aa). Mg(2+) contacts are provided by aspartate 1951 and aspartate 2045.

This sequence belongs to the picornaviruses polyprotein family. In terms of assembly, interacts with capsid protein VP1 and capsid protein VP3 to form heterotrimeric protomers. As to quaternary structure, interacts with capsid protein VP0, and capsid protein VP3 to form heterotrimeric protomers. Five protomers subsequently associate to form pentamers which serve as building blocks for the capsid. Interacts with capsid protein VP2, capsid protein VP3 and capsid protein VP4 following cleavage of capsid protein VP0. Interacts with capsid protein VP1 and capsid protein VP3 in the mature capsid. In terms of assembly, interacts with capsid protein VP0 and capsid protein VP1 to form heterotrimeric protomers. Five protomers subsequently associate to form pentamers which serve as building blocks for the capsid. Interacts with capsid protein VP4 in the mature capsid. Interacts with protein 2C; this interaction may be important for virion morphogenesis. As to quaternary structure, interacts with capsid protein VP1 and capsid protein VP3. Homodimer. In terms of assembly, homohexamer; forms a hexameric ring structure with 6-fold symmetry characteristic of AAA+ ATPases. Interacts (via N-terminus) with host RTN3 (via reticulon domain); this interaction is important for viral replication. Interacts with capsid protein VP3; this interaction may be important for virion morphogenesis. As to quaternary structure, interacts with protein 3CD. Homodimer. Interacts with host GBF1. Interacts (via GOLD domain) with host ACBD3 (via GOLD domain); this interaction allows the formation of a viral protein 3A/ACBD3 heterotetramer with a 2:2 stoichiometry, which will stimulate the recruitment of host PI4KB in order to synthesize PI4P at the viral RNA replication sites. In terms of assembly, interacts with RNA-directed RNA polymerase. As to quaternary structure, interacts with protein 3AB and with RNA-directed RNA polymerase. Interacts with Viral protein genome-linked and with protein 3CD. Mg(2+) serves as cofactor. Post-translationally, specific enzymatic cleavages in vivo by the viral proteases yield processing intermediates and the mature proteins. Myristoylation is required for the formation of pentamers during virus assembly. Further assembly of 12 pentamers and a molecule of genomic RNA generates the provirion. In terms of processing, during virion maturation, immature virions are rendered infectious following cleavage of VP0 into VP4 and VP2. This maturation seems to be an autocatalytic event triggered by the presence of RNA in the capsid and it is followed by a conformational change infectious virion. Post-translationally, myristoylation is required during RNA encapsidation and formation of the mature virus particle. VPg is uridylylated by the polymerase into VPg-pUpU. This acts as a nucleotide-peptide primer for the genomic RNA replication.

It localises to the virion. It is found in the host cytoplasm. The protein resides in the host cytoplasmic vesicle membrane. Its subcellular location is the host nucleus. The catalysed reaction is a ribonucleoside 5'-triphosphate + H2O = a ribonucleoside 5'-diphosphate + phosphate + H(+). It carries out the reaction Selective cleavage of Tyr-|-Gly bond in the picornavirus polyprotein.. It catalyses the reaction RNA(n) + a ribonucleoside 5'-triphosphate = RNA(n+1) + diphosphate. The enzyme catalyses Selective cleavage of Gln-|-Gly bond in the poliovirus polyprotein. In other picornavirus reactions Glu may be substituted for Gln, and Ser or Thr for Gly.. With respect to regulation, replication or transcription is subject to high level of random mutations by the nucleotide analog ribavirin. Its function is as follows. Forms an icosahedral capsid of pseudo T=3 symmetry with capsid proteins VP2 and VP3. The capsid is 300 Angstroms in diameter, composed of 60 copies of each capsid protein and enclosing the viral positive strand RNA genome. Capsid protein VP1 mainly forms the vertices of the capsid. Capsid protein VP1 interacts with host cell receptor to provide virion attachment to target host cells. This attachment induces virion internalization. Tyrosine kinases are probably involved in the entry process. After binding to its receptor, the capsid undergoes conformational changes. Capsid protein VP1 N-terminus (that contains an amphipathic alpha-helix) and capsid protein VP4 are externalized. Together, they shape a pore in the host membrane through which viral genome is translocated to host cell cytoplasm. Functionally, forms an icosahedral capsid of pseudo T=3 symmetry with capsid proteins VP2 and VP3. The capsid is 300 Angstroms in diameter, composed of 60 copies of each capsid protein and enclosing the viral positive strand RNA genome. Lies on the inner surface of the capsid shell. After binding to the host receptor, the capsid undergoes conformational changes. Capsid protein VP4 is released, Capsid protein VP1 N-terminus is externalized, and together, they shape a pore in the host membrane through which the viral genome is translocated into the host cell cytoplasm. In terms of biological role, component of immature procapsids, which is cleaved into capsid proteins VP4 and VP2 after maturation. Allows the capsid to remain inactive before the maturation step. Its function is as follows. Cysteine protease that cleaves viral polyprotein and specific host proteins. It is responsible for the autocatalytic cleavage between the P1 and P2 regions, which is the first cleavage occurring in the polyprotein. Also cleaves the host translation initiation factor EIF4G1, in order to shut down the capped cellular mRNA translation. Inhibits the host nucleus-cytoplasm protein and RNA trafficking by cleaving host members of the nuclear pores. Counteracts stress granule formation probably by antagonizing its assembly or promoting its dissassembly. Functionally, plays an essential role in the virus replication cycle by acting as a viroporin. Creates a pore in the host endoplasmic reticulum and as a consequence releases Ca2+ in the cytoplasm of infected cell. In turn, high levels of cytoplasmic calcium may trigger membrane trafficking and transport of viral ER-associated proteins to viroplasms, sites of viral genome replication. Induces and associates with structural rearrangements of intracellular membranes. Displays RNA-binding, nucleotide binding and NTPase activities. May play a role in virion morphogenesis and viral RNA encapsidation by interacting with the capsid protein VP3. In terms of biological role, localizes the viral replication complex to the surface of membranous vesicles. Together with protein 3CD binds the Cis-Active RNA Element (CRE) which is involved in RNA synthesis initiation. Acts as a cofactor to stimulate the activity of 3D polymerase, maybe through a nucleid acid chaperone activity. Its function is as follows. Localizes the viral replication complex to the surface of membranous vesicles. It inhibits host cell endoplasmic reticulum-to-Golgi apparatus transport and causes the disassembly of the Golgi complex, possibly through GBF1 interaction. This would result in depletion of MHC, trail receptors and IFN receptors at the host cell surface. Plays an essential role in viral RNA replication by recruiting ACBD3 and PI4KB at the viral replication sites, thereby allowing the formation of the rearranged membranous structures where viral replication takes place. Functionally, acts as a primer for viral RNA replication and remains covalently bound to viral genomic RNA. VPg is uridylylated prior to priming replication into VPg-pUpU. The oriI viral genomic sequence may act as a template for this. The VPg-pUpU is then used as primer on the genomic RNA poly(A) by the RNA-dependent RNA polymerase to replicate the viral genome. During genome replication, the VPg-RNA linkage is removed by the host TDP2, thereby accelerating replication. During the late stage of the replication cycle, host TDP2 is excluded from sites of viral RNA synthesis and encapsidation, allowing for the generation of progeny virions. Involved in the viral replication complex and viral polypeptide maturation. It exhibits protease activity with a specificity and catalytic efficiency that is different from protease 3C. Protein 3CD lacks polymerase activity. Protein 3CD binds to the 5'UTR of the viral genome. In terms of biological role, replicates the viral genomic RNA on the surface of intracellular membranes. May form linear arrays of subunits that propagate along a strong head-to-tail interaction called interface-I. Covalently attaches UMP to a tyrosine of VPg, which is used to prime RNA synthesis. The positive stranded RNA genome is first replicated at virus induced membranous vesicles, creating a dsRNA genomic replication form. This dsRNA is then used as template to synthesize positive stranded RNA genomes. ss(+)RNA genomes are either translated, replicated or encapsidated. Its function is as follows. Major viral protease that mediates proteolytic processing of the polyprotein. Cleaves host EIF5B, contributing to host translation shutoff. Also cleaves host PABPC1, contributing to host translation shutoff. Cleaves host NLRP1, triggers host N-glycine-mediated degradation of the autoinhibitory NLRP1 N-terminal fragment. This chain is Genome polyprotein, found in Homo sapiens (Human).